The primary structure comprises 208 residues: ATP-dependent Clp protease proteolytic subunit (208 aa).

The active-site Nucleophile is the serine 107. The active site involves histidine 132.

It belongs to the peptidase S14 family. As to quaternary structure, fourteen ClpP subunits assemble into 2 heptameric rings which stack back to back to give a disk-like structure with a central cavity, resembling the structure of eukaryotic proteasomes.

Its subcellular location is the cytoplasm. It carries out the reaction Hydrolysis of proteins to small peptides in the presence of ATP and magnesium. alpha-casein is the usual test substrate. In the absence of ATP, only oligopeptides shorter than five residues are hydrolyzed (such as succinyl-Leu-Tyr-|-NHMec, and Leu-Tyr-Leu-|-Tyr-Trp, in which cleavage of the -Tyr-|-Leu- and -Tyr-|-Trp bonds also occurs).. Functionally, cleaves peptides in various proteins in a process that requires ATP hydrolysis. Has a chymotrypsin-like activity. Plays a major role in the degradation of misfolded proteins. The protein is ATP-dependent Clp protease proteolytic subunit of Jannaschia sp. (strain CCS1).